Consider the following 542-residue polypeptide: MAKEIIFSDNARNALARGVAKLTDAVKVTMGPRGRNVLIQKSYGNPIITKDGVSVAREIELQDKLENMGATLVKDVASRTADEAGDGTTTATVLANAIFSEGLRNITAGANPIEVKRGMDKACEEILKHLKASSKVINGKKDIAQVATISANSDTAIGDMIAEAMEKVGQDGVITVEEAKGIVDELDVVEGMQFDRGYLSPYFITNTEKMTAEIENPWILLADSKIASLKDLLPVLEQVQKTSRPLLIIAEDVEGEALSTLVVNKLRGVLNISAVKAPGFGDRRKAMLQDIAVLTAGTVISEETGHTLSGATIQHLGQASRIVIDKDNTVIVNGAGTSEAVQARVDAIKVQMNTTTSEYDKEKLQERLAKLSGGVAVIKVGAASETEMKEKKDRVDDALSATKAAVEEGIVIGGGAALVRAGAKVKLDLSGDQKIGCEIILRAIKAPLKQIATNAGYDAGVVVNAVEGATNENIGFNAATGEYVDMFEAGIIDPFKVGRVALTNATSIASLLLTTEAAIYELPEEKSSMPDMSGMGGMPGMM.

Residues 29-32 (TMGP), K50, 86-90 (DGTTT), G414, 477-479 (NAA), and D493 each bind ATP.

The protein belongs to the chaperonin (HSP60) family. In terms of assembly, forms a cylinder of 14 subunits composed of two heptameric rings stacked back-to-back. Interacts with the co-chaperonin GroES.

Its subcellular location is the cytoplasm. The enzyme catalyses ATP + H2O + a folded polypeptide = ADP + phosphate + an unfolded polypeptide.. In terms of biological role, together with its co-chaperonin GroES, plays an essential role in assisting protein folding. The GroEL-GroES system forms a nano-cage that allows encapsulation of the non-native substrate proteins and provides a physical environment optimized to promote and accelerate protein folding. This is Chaperonin GroEL from Sulfurimonas denitrificans (strain ATCC 33889 / DSM 1251) (Thiomicrospira denitrificans (strain ATCC 33889 / DSM 1251)).